A 451-amino-acid polypeptide reads, in one-letter code: UPF0210 protein LMHCC_2097 (451 aa).

Belongs to the UPF0210 family. Homodimer.

The sequence is that of UPF0210 protein LMHCC_2097 from Listeria monocytogenes serotype 4a (strain HCC23).